Consider the following 391-residue polypeptide: D-alanine--D-alanine ligase (391 aa).

The segment at 1-24 (MSSENLPQSPERAESPQAPRRKPR) is disordered. The ATP-grasp domain maps to 171-381 (KRVFLSFGLP…YPELVDRLIQ (211 aa)). An ATP-binding site is contributed by 207-262 (AGEHGWPLFIKPARGGSSMGITKVDSVEGLDAAIEEARRHDPKFLVESLLRGREIE). Residues D335, E348, and N350 each coordinate Mg(2+).

Belongs to the D-alanine--D-alanine ligase family. Requires Mg(2+) as cofactor. Mn(2+) is required as a cofactor.

The protein resides in the cytoplasm. The catalysed reaction is 2 D-alanine + ATP = D-alanyl-D-alanine + ADP + phosphate + H(+). It participates in cell wall biogenesis; peptidoglycan biosynthesis. Its function is as follows. Cell wall formation. This chain is D-alanine--D-alanine ligase, found in Streptomyces griseus subsp. griseus (strain JCM 4626 / CBS 651.72 / NBRC 13350 / KCC S-0626 / ISP 5235).